Consider the following 262-residue polypeptide: 4-hydroxy-2-oxo-heptane-1,7-dioate aldolase (262 aa).

H45 serves as the catalytic Proton acceptor. A substrate-binding site is contributed by Q147. E149 lines the a divalent metal cation pocket. Positions 174 and 175 each coordinate substrate. A divalent metal cation is bound at residue D175.

Belongs to the HpcH/HpaI aldolase family. In terms of assembly, homohexamer; trimer of dimers. A divalent metal cation serves as cofactor.

The enzyme catalyses 4-hydroxy-2-oxoheptanedioate = succinate semialdehyde + pyruvate. It participates in aromatic compound metabolism; 4-hydroxyphenylacetate degradation; pyruvate and succinate semialdehyde from 4-hydroxyphenylacetate: step 7/7. Catalyzes the reversible retro-aldol cleavage of 4-hydroxy-2-ketoheptane-1,7-dioate (HKHD) to pyruvate and succinic semialdehyde. This Shigella boydii serotype 4 (strain Sb227) protein is 4-hydroxy-2-oxo-heptane-1,7-dioate aldolase.